A 124-amino-acid chain; its full sequence is Con-Ins Tx1 (124 aa).

The signal sequence occupies residues 1–24 (MTTSSYFLLVALGLLLYVFQSSFG). Cystine bridges form between cysteine 29–cysteine 107, cysteine 41–cysteine 110, cysteine 53–cysteine 123, and cysteine 109–cysteine 114. Proline 34 is subject to 4-hydroxyproline; partial. The propeptide at 59-92 (EQGGANNARANTGRTSSLMKRRGFLSLLKKRGKR) is c peptide. The residue at position 118 (glutamate 118) is a 4-carboxyglutamate; partial.

This sequence belongs to the insulin family. As to quaternary structure, heterodimer of A and B chains; disulfide-linked. In terms of tissue distribution, expressed by the venom gland.

It localises to the secreted. Its function is as follows. This venom insulin facilitates prey capture by rapidly inducing hypoglycemic shock. Intraperitoneal injection of this peptide into zebrafish lowers blood glucose with the same potency than human insulin. In vivo, when applied to water, this peptide reduces overall locomotor activity of zebrafish larvae, observed as a significant decrease in the percentage of time spent swimming and movement frequency. This chain is Con-Ins Tx1, found in Conus textile (Cloth-of-gold cone).